We begin with the raw amino-acid sequence, 132 residues long: Seminal vesicle protein SVP-2 (132 aa).

Positions 1–14 (HLALLLILENQASG) are cleaved as a signal peptide. Residues 33–81 (HKEEVEESESSRGQDFDKRRFWEKDDPTGEHVSVRHEHLEKSHIRFKED) are compositionally biased toward basic and acidic residues. Disordered stretches follow at residues 33 to 104 (HKEE…LKRH) and 113 to 132 (VEDQALANGADPGKSNMQRV). Residues 104-132 (HDAMEELVSVEDQALANGADPGKSNMQRV) constitute a propeptide that is removed on maturation.

It to the SVP-1/-3/-4 precursor, particularly in regions where protein processing must occur.

It localises to the secreted. This chain is Seminal vesicle protein SVP-2, found in Cavia porcellus (Guinea pig).